A 241-amino-acid chain; its full sequence is Deoxynucleotide monophosphate kinase (241 aa).

K10 is a binding site for dGMP. R11, G13, D15, and T16 together coordinate ATP. Positions 36 and 37 each coordinate dGMP. Y42 lines the Mg(2+) pocket. R68 serves as a coordination point for dGMP. Positions 85 and 108 each coordinate Mg(2+). Residues R132, G139, T140, V144, W152, D175, R177, Q178, E181, and T208 each contribute to the dGMP site.

This sequence belongs to the dNMP kinase family. Homodimer. The cofactor is Mg(2+).

The catalysed reaction is dTMP + ATP = dTDP + ADP. It carries out the reaction dGMP + ATP = dGDP + ADP. It catalyses the reaction 5-hydroxymethyl-dCMP + ATP = 5-hydroxymethyl-dCDP + ADP. Inhibited by pyridoxal 5'-phosphate and diethylpyrocarbonate. In terms of biological role, allows the synthesis of deoxyribonucleoside triphosphates necessary for the rapid viral DNA replication. Phosphorylates dGMP, dTMP and 5-hydroxymethyl-dCMP (hmdCMP) while excluding dCMP and dAMP. The phosphorylation of 5-hydroxymethyl-dCMP represents the first step in the replacement of cytosine by hydroxymethylcytosine in new viral DNA genomes. The protein is Deoxynucleotide monophosphate kinase (1) of Enterobacteria phage T4 (Bacteriophage T4).